The primary structure comprises 945 residues: Isoleucine--tRNA ligase (945 aa).

Positions 66 to 76 (PYANGDIHLGH) match the 'HIGH' region motif. Glu-581 is a binding site for L-isoleucyl-5'-AMP. Positions 622–626 (KMSKS) match the 'KMSKS' region motif. Lys-625 is a binding site for ATP. Cys-908, Cys-911, Cys-928, and Cys-931 together coordinate Zn(2+).

Belongs to the class-I aminoacyl-tRNA synthetase family. IleS type 1 subfamily. In terms of assembly, monomer. Zn(2+) is required as a cofactor.

Its subcellular location is the cytoplasm. It catalyses the reaction tRNA(Ile) + L-isoleucine + ATP = L-isoleucyl-tRNA(Ile) + AMP + diphosphate. In terms of biological role, catalyzes the attachment of isoleucine to tRNA(Ile). As IleRS can inadvertently accommodate and process structurally similar amino acids such as valine, to avoid such errors it has two additional distinct tRNA(Ile)-dependent editing activities. One activity is designated as 'pretransfer' editing and involves the hydrolysis of activated Val-AMP. The other activity is designated 'posttransfer' editing and involves deacylation of mischarged Val-tRNA(Ile). This is Isoleucine--tRNA ligase from Paraburkholderia phymatum (strain DSM 17167 / CIP 108236 / LMG 21445 / STM815) (Burkholderia phymatum).